The following is a 336-amino-acid chain: tRNA(Ile)-lysidine synthase (336 aa).

32-37 is a binding site for ATP; the sequence is SGGQDS.

It belongs to the tRNA(Ile)-lysidine synthase family.

It localises to the cytoplasm. The enzyme catalyses cytidine(34) in tRNA(Ile2) + L-lysine + ATP = lysidine(34) in tRNA(Ile2) + AMP + diphosphate + H(+). Ligates lysine onto the cytidine present at position 34 of the AUA codon-specific tRNA(Ile) that contains the anticodon CAU, in an ATP-dependent manner. Cytidine is converted to lysidine, thus changing the amino acid specificity of the tRNA from methionine to isoleucine. This is tRNA(Ile)-lysidine synthase from Synechococcus sp. (strain JA-3-3Ab) (Cyanobacteria bacterium Yellowstone A-Prime).